The sequence spans 470 residues: MATFLSEDFLLGNEFARRLYHDYAADQPIFDYHCHLPPEQIAENTRFKNLYEIWLKGDHYKWRAMRTNGVAERLCTGDAGDREKFDAWAATVPHTIGNPLYHWTHLELRRPFGITGTLLSPTTADDIWQRGNALLAQDDFRARGIMQQMNVKMVGTTDDPIDDLRHHKAIAADSSFDIKVLPSWRPDKAFNIDAPGFNDYLQKLEAAADINIGRFSALCDALKKRMDHFAAHGCKVADHALDVVVYGEADESTLDAILTARLSGKLPTPEQSAQFKSAVLLFLAAEYQRREWVQQYHIGALRNNNSRMLASVGPDIGFDSINDRPLAEALSRLLDAQARQGGLPKTILYCLNPRDNEVIGTMVGNFQGEGTPGKMQFGSGWWFNDQKDGMQRQMTQLAQLGLLSRFVGMLTDSRSFLSYTRHEYFRRILCQMIGGWVENGEAPADITLLGEMVKNICFDNAKNYFAIELA.

Belongs to the metallo-dependent hydrolases superfamily. Uronate isomerase family.

It carries out the reaction D-glucuronate = D-fructuronate. It catalyses the reaction aldehydo-D-galacturonate = keto-D-tagaturonate. Its pathway is carbohydrate metabolism; pentose and glucuronate interconversion. The polypeptide is Uronate isomerase (Serratia proteamaculans (strain 568)).